Consider the following 334-residue polypeptide: Biotin synthase (334 aa).

A Radical SAM core domain is found at 55-285 (GEGGGVHACS…AHPSKIIKFA (231 aa)). [4Fe-4S] cluster contacts are provided by cysteine 73, cysteine 77, and cysteine 80. [2Fe-2S] cluster contacts are provided by cysteine 152, cysteine 213, and lysine 283.

The protein belongs to the radical SAM superfamily. Biotin synthase family. As to quaternary structure, homodimer. The cofactor is [4Fe-4S] cluster. [2Fe-2S] cluster is required as a cofactor.

The catalysed reaction is (4R,5S)-dethiobiotin + (sulfur carrier)-SH + 2 reduced [2Fe-2S]-[ferredoxin] + 2 S-adenosyl-L-methionine = (sulfur carrier)-H + biotin + 2 5'-deoxyadenosine + 2 L-methionine + 2 oxidized [2Fe-2S]-[ferredoxin]. It functions in the pathway cofactor biosynthesis; biotin biosynthesis; biotin from 7,8-diaminononanoate: step 2/2. Its function is as follows. Catalyzes the conversion of dethiobiotin (DTB) to biotin by the insertion of a sulfur atom into dethiobiotin via a radical-based mechanism. This is Biotin synthase from Chlorobaculum parvum (strain DSM 263 / NCIMB 8327) (Chlorobium vibrioforme subsp. thiosulfatophilum).